The primary structure comprises 568 residues: Urease subunit alpha (568 aa).

A Urease domain is found at 133–568 (GGLDIHIHFN…ELPLAQRYLL (436 aa)). Residues histidine 138, histidine 140, and lysine 217 each coordinate Ni(2+). An N6-carboxylysine modification is found at lysine 217. Residue histidine 219 coordinates substrate. Ni(2+) is bound by residues histidine 246 and histidine 272. Histidine 320 acts as the Proton donor in catalysis. Aspartate 360 provides a ligand contact to Ni(2+).

The protein belongs to the metallo-dependent hydrolases superfamily. Urease alpha subunit family. In terms of assembly, heterotrimer of UreA (gamma), UreB (beta) and UreC (alpha) subunits. Three heterotrimers associate to form the active enzyme. Ni cation serves as cofactor. Post-translationally, carboxylation allows a single lysine to coordinate two nickel ions.

The protein resides in the cytoplasm. The enzyme catalyses urea + 2 H2O + H(+) = hydrogencarbonate + 2 NH4(+). Its pathway is nitrogen metabolism; urea degradation; CO(2) and NH(3) from urea (urease route): step 1/1. In Haloarcula marismortui (strain ATCC 43049 / DSM 3752 / JCM 8966 / VKM B-1809) (Halobacterium marismortui), this protein is Urease subunit alpha.